The chain runs to 274 residues: Large ribosomal subunit protein uL2 (274 aa).

The interval 223–256 is disordered; it reads VAMNPVDHPHGGGEGRTSGGRHPVTPWGIPTKGY.

It belongs to the universal ribosomal protein uL2 family. Part of the 50S ribosomal subunit. Forms a bridge to the 30S subunit in the 70S ribosome.

Its function is as follows. One of the primary rRNA binding proteins. Required for association of the 30S and 50S subunits to form the 70S ribosome, for tRNA binding and peptide bond formation. It has been suggested to have peptidyltransferase activity; this is somewhat controversial. Makes several contacts with the 16S rRNA in the 70S ribosome. This Trichlorobacter lovleyi (strain ATCC BAA-1151 / DSM 17278 / SZ) (Geobacter lovleyi) protein is Large ribosomal subunit protein uL2.